A 248-amino-acid polypeptide reads, in one-letter code: PF03932 family protein CutC (248 aa).

The protein belongs to the CutC family. In terms of assembly, homodimer.

Its subcellular location is the cytoplasm. In Salmonella typhimurium (strain LT2 / SGSC1412 / ATCC 700720), this protein is PF03932 family protein CutC.